Here is a 365-residue protein sequence, read N- to C-terminus: Putative glutamate--cysteine ligase 2-2 (365 aa).

It belongs to the glutamate--cysteine ligase type 2 family. YbdK subfamily.

The enzyme catalyses L-cysteine + L-glutamate + ATP = gamma-L-glutamyl-L-cysteine + ADP + phosphate + H(+). ATP-dependent carboxylate-amine ligase which exhibits weak glutamate--cysteine ligase activity. This chain is Putative glutamate--cysteine ligase 2-2, found in Mycolicibacterium vanbaalenii (strain DSM 7251 / JCM 13017 / BCRC 16820 / KCTC 9966 / NRRL B-24157 / PYR-1) (Mycobacterium vanbaalenii).